The primary structure comprises 874 residues: Alanine--tRNA ligase (874 aa).

Residues His-562, His-566, Cys-665, and His-669 each contribute to the Zn(2+) site.

It belongs to the class-II aminoacyl-tRNA synthetase family. Zn(2+) serves as cofactor.

The protein resides in the cytoplasm. The enzyme catalyses tRNA(Ala) + L-alanine + ATP = L-alanyl-tRNA(Ala) + AMP + diphosphate. Its function is as follows. Catalyzes the attachment of alanine to tRNA(Ala) in a two-step reaction: alanine is first activated by ATP to form Ala-AMP and then transferred to the acceptor end of tRNA(Ala). Also edits incorrectly charged Ser-tRNA(Ala) and Gly-tRNA(Ala) via its editing domain. This chain is Alanine--tRNA ligase, found in Pseudomonas syringae pv. syringae (strain B728a).